Here is a 147-residue protein sequence, read N- to C-terminus: Hemoglobin subunit beta-1 (147 aa).

Residues 3–147 (EWTATERTHI…VVSALGRQYH (145 aa)) form the Globin domain. Heme b-binding residues include H64 and H93.

Belongs to the globin family. Hb 1 is a heterotetramer of two alpha-1 and two beta-1 chains. Hb 2 is a heterotetramer of two alpha-2 and two beta-1 chains. As to expression, red blood cells.

Its function is as follows. Involved in oxygen transport from gills to the various peripheral tissues. This is Hemoglobin subunit beta-1 (hbb1) from Boreogadus saida (Polar cod).